Consider the following 653-residue polypeptide: Serine/threonine-protein phosphatase with EF-hands 1 (653 aa).

The region spanning 16–45 is the IQ domain; it reads SLRAALIIQNWYRGYKARLKARQHYALTIF. The segment at 121–455 is catalytic; sequence IDLLLEAFKE…PRFFQYQVTK (335 aa). Mn(2+) is bound by residues D172, H174, D201, and N233. The active-site Proton donor is H234. Mn(2+)-binding residues include H285 and H403. 3 EF-hand domains span residues 483 to 518, 566 to 601, and 606 to 641; these read SRKS…ILGL, RYRS…FSSH, and IDDS…VHRY. D579, D581, S583, E590, D619, N621, D623, S625, and E630 together coordinate Ca(2+).

Belongs to the PPP phosphatase family. It depends on Mn(2+) as a cofactor. Mg(2+) serves as cofactor. Detected in retina and retinal derived Y-79 retinoblastoma cells. Also found in fetal brain.

It catalyses the reaction O-phospho-L-seryl-[protein] + H2O = L-seryl-[protein] + phosphate. The catalysed reaction is O-phospho-L-threonyl-[protein] + H2O = L-threonyl-[protein] + phosphate. Its activity is regulated as follows. Activated by calcium. In terms of biological role, may have a role in the recovery or adaptation response of photoreceptors. May have a role in development. The chain is Serine/threonine-protein phosphatase with EF-hands 1 (PPEF1) from Homo sapiens (Human).